A 423-amino-acid chain; its full sequence is Imidazolonepropionase (423 aa).

Fe(3+)-binding residues include histidine 78 and histidine 80. Zn(2+) is bound by residues histidine 78 and histidine 80. Residues arginine 87, tyrosine 150, and histidine 183 each contribute to the 4-imidazolone-5-propanoate site. Residue tyrosine 150 participates in N-formimidoyl-L-glutamate binding. A Fe(3+)-binding site is contributed by histidine 247. Histidine 247 serves as a coordination point for Zn(2+). Residue glutamate 250 participates in 4-imidazolone-5-propanoate binding. Aspartate 322 is a binding site for Fe(3+). Aspartate 322 is a Zn(2+) binding site. N-formimidoyl-L-glutamate contacts are provided by asparagine 324 and glycine 326. Position 327 (serine 327) interacts with 4-imidazolone-5-propanoate.

It belongs to the metallo-dependent hydrolases superfamily. HutI family. It depends on Zn(2+) as a cofactor. Requires Fe(3+) as cofactor.

The protein localises to the cytoplasm. The enzyme catalyses 4-imidazolone-5-propanoate + H2O = N-formimidoyl-L-glutamate. It functions in the pathway amino-acid degradation; L-histidine degradation into L-glutamate; N-formimidoyl-L-glutamate from L-histidine: step 3/3. Catalyzes the hydrolytic cleavage of the carbon-nitrogen bond in imidazolone-5-propanoate to yield N-formimidoyl-L-glutamate. It is the third step in the universal histidine degradation pathway. This Bacillus anthracis (strain A0248) protein is Imidazolonepropionase.